The primary structure comprises 329 residues: Acetyl-coenzyme A carboxylase carboxyl transferase subunit alpha (329 aa).

Positions 40-294 (QLETLAARRR…REAIERHLDD (255 aa)) constitute a CoA carboxyltransferase C-terminal domain.

This sequence belongs to the AccA family. In terms of assembly, acetyl-CoA carboxylase is a heterohexamer composed of biotin carboxyl carrier protein (AccB), biotin carboxylase (AccC) and two subunits each of ACCase subunit alpha (AccA) and ACCase subunit beta (AccD).

The protein resides in the cytoplasm. It catalyses the reaction N(6)-carboxybiotinyl-L-lysyl-[protein] + acetyl-CoA = N(6)-biotinyl-L-lysyl-[protein] + malonyl-CoA. Its pathway is lipid metabolism; malonyl-CoA biosynthesis; malonyl-CoA from acetyl-CoA: step 1/1. Its function is as follows. Component of the acetyl coenzyme A carboxylase (ACC) complex. First, biotin carboxylase catalyzes the carboxylation of biotin on its carrier protein (BCCP) and then the CO(2) group is transferred by the carboxyltransferase to acetyl-CoA to form malonyl-CoA. This is Acetyl-coenzyme A carboxylase carboxyl transferase subunit alpha from Prochlorococcus marinus (strain MIT 9303).